The chain runs to 235 residues: Putative uridine kinase C227.14 (235 aa).

36-43 (GGPGSGKS) is an ATP binding site.

It belongs to the uridine kinase family.

The protein resides in the cytoplasm. Its subcellular location is the nucleus. It catalyses the reaction uridine + ATP = UMP + ADP + H(+). The enzyme catalyses cytidine + ATP = CMP + ADP + H(+). The protein operates within pyrimidine metabolism; CTP biosynthesis via salvage pathway; CTP from cytidine: step 1/3. Its pathway is pyrimidine metabolism; UMP biosynthesis via salvage pathway; UMP from uridine: step 1/1. The sequence is that of Putative uridine kinase C227.14 from Schizosaccharomyces pombe (strain 972 / ATCC 24843) (Fission yeast).